A 79-amino-acid chain; its full sequence is RNA-binding protein Hfq (79 aa).

One can recognise a Sm domain in the interval 10-70 (DVFLKTVRKQ…ISTIMPGQPI (61 aa)).

The protein belongs to the Hfq family. Homohexamer.

Functionally, RNA chaperone that binds small regulatory RNA (sRNAs) and mRNAs to facilitate mRNA translational regulation in response to envelope stress, environmental stress and changes in metabolite concentrations. Also binds with high specificity to tRNAs. The protein is RNA-binding protein Hfq of Bartonella bacilliformis (strain ATCC 35685 / KC583 / Herrer 020/F12,63).